Reading from the N-terminus, the 278-residue chain is Replication protein A 32 kDa subunit B (278 aa).

Positions 70-143 (VVIVGRISRM…RSVNVFSVRP (74 aa)) form a DNA-binding region, OB.

This sequence belongs to the replication factor A protein 2 family. Heterotrimer of RPA1, RPA2 and RPA3 (canonical replication protein A complex). Phosphorylated in a cell-cycle-dependent manner (from the S phase until mitosis). In response to DNA damage, recruited to DNA-repair nuclear foci, as a hypophosphorylated form.

The protein resides in the nucleus. In terms of biological role, component of the replication protein A complex (RPA) required for DNA recombination, repair and replication. The activity of RPA is mediated by single-stranded DNA binding and protein interactions. Required fo cell division in meristems. Involved in the maintenance of transcriptional epigenetic gene silencing (TGS) at specific loci (including some transposons) by regulating histone H3 acetylation, 'Lys-4' and 'Lys-9' methylation. In Arabidopsis thaliana (Mouse-ear cress), this protein is Replication protein A 32 kDa subunit B (RPA2B).